A 306-amino-acid polypeptide reads, in one-letter code: tRNA dimethylallyltransferase (306 aa).

Position 9–16 (9–16 (GPTAIGKT)) interacts with ATP. Position 11–16 (11–16 (TAIGKT)) interacts with substrate. The segment at 34–37 (DSMQ) is interaction with substrate tRNA.

It belongs to the IPP transferase family. In terms of assembly, monomer. Mg(2+) is required as a cofactor.

The enzyme catalyses adenosine(37) in tRNA + dimethylallyl diphosphate = N(6)-dimethylallyladenosine(37) in tRNA + diphosphate. Catalyzes the transfer of a dimethylallyl group onto the adenine at position 37 in tRNAs that read codons beginning with uridine, leading to the formation of N6-(dimethylallyl)adenosine (i(6)A). The polypeptide is tRNA dimethylallyltransferase (Lactobacillus helveticus (strain DPC 4571)).